Reading from the N-terminus, the 241-residue chain is Pyridoxal phosphate phosphatase PHOSPHO2 (241 aa).

The active-site Nucleophile is the aspartate 8. 2 residues coordinate Mg(2+): aspartate 8 and aspartate 10. Aspartate 10 (proton donor) is an active-site residue. Aspartate 19 and aspartate 99 together coordinate substrate. Aspartate 179 is a binding site for Mg(2+).

This sequence belongs to the HAD-like hydrolase superfamily. PHOSPHO family. Requires Mg(2+) as cofactor.

It carries out the reaction pyridoxal 5'-phosphate + H2O = pyridoxal + phosphate. Functionally, phosphatase that has high activity toward pyridoxal 5'-phosphate (PLP). Also active at much lower level toward pyrophosphate, phosphoethanolamine (PEA), phosphocholine (PCho), phospho-l-tyrosine, fructose-6-phosphate, p-nitrophenyl phosphate, and h-glycerophosphate. The protein is Pyridoxal phosphate phosphatase PHOSPHO2 (PHOSPHO2) of Homo sapiens (Human).